The following is a 358-amino-acid chain: Programmed cell death protein 2-like (358 aa).

The residue at position 2 (Ala2) is an N-acetylalanine. Ser20 carries the post-translational modification Phosphoserine. Position 22 is a phosphothreonine (Thr22).

In terms of tissue distribution, higher expression in lung, colon, mammary gland, cervix, stomach and small intestine.

Over-expression suppresses AP1, CREB, NFAT, and NF-kB transcriptional activation, and delays cell cycle progression at S phase. This chain is Programmed cell death protein 2-like (PDCD2L), found in Homo sapiens (Human).